The sequence spans 82 residues: Photosystem I iron-sulfur center (82 aa).

4Fe-4S ferredoxin-type domains are found at residues 2-31 (SHTVKIYDTCIGCTQCVRACPTDVLEMVPW) and 37-68 (GQIASSPRVEDCVGCKRCETACPTDFLSVRVY). [4Fe-4S] cluster is bound by residues cysteine 11, cysteine 14, cysteine 17, cysteine 21, cysteine 48, cysteine 51, cysteine 54, and cysteine 58.

In terms of assembly, the eukaryotic PSI reaction center is composed of at least 11 subunits. The cofactor is [4Fe-4S] cluster.

The protein localises to the plastid. Its subcellular location is the chloroplast thylakoid membrane. The catalysed reaction is reduced [plastocyanin] + hnu + oxidized [2Fe-2S]-[ferredoxin] = oxidized [plastocyanin] + reduced [2Fe-2S]-[ferredoxin]. In terms of biological role, apoprotein for the two 4Fe-4S centers FA and FB of photosystem I (PSI); essential for photochemical activity. FB is the terminal electron acceptor of PSI, donating electrons to ferredoxin. The C-terminus interacts with PsaA/B/D and helps assemble the protein into the PSI complex. Required for binding of PsaD and PsaE to PSI. PSI is a plastocyanin/cytochrome c6-ferredoxin oxidoreductase, converting photonic excitation into a charge separation, which transfers an electron from the donor P700 chlorophyll pair to the spectroscopically characterized acceptors A0, A1, FX, FA and FB in turn. The protein is Photosystem I iron-sulfur center of Trieres chinensis (Marine centric diatom).